A 432-amino-acid chain; its full sequence is Amino-acid acetyltransferase (432 aa).

The N-acetyltransferase domain maps to 286–425 (EKLREATIED…ASLYNYQRQS (140 aa)).

Belongs to the acetyltransferase family. ArgA subfamily.

The protein localises to the cytoplasm. It catalyses the reaction L-glutamate + acetyl-CoA = N-acetyl-L-glutamate + CoA + H(+). Its pathway is amino-acid biosynthesis; L-arginine biosynthesis; N(2)-acetyl-L-ornithine from L-glutamate: step 1/4. The polypeptide is Amino-acid acetyltransferase (Azotobacter vinelandii (strain DJ / ATCC BAA-1303)).